The following is a 316-amino-acid chain: Ribosomal RNA small subunit methyltransferase H (316 aa).

Residues 35 to 37 (AGH), aspartate 55, phenylalanine 84, aspartate 105, and glutamine 112 each bind S-adenosyl-L-methionine.

Belongs to the methyltransferase superfamily. RsmH family.

The protein resides in the cytoplasm. It carries out the reaction cytidine(1402) in 16S rRNA + S-adenosyl-L-methionine = N(4)-methylcytidine(1402) in 16S rRNA + S-adenosyl-L-homocysteine + H(+). Functionally, specifically methylates the N4 position of cytidine in position 1402 (C1402) of 16S rRNA. The polypeptide is Ribosomal RNA small subunit methyltransferase H (Streptococcus gordonii (strain Challis / ATCC 35105 / BCRC 15272 / CH1 / DL1 / V288)).